Consider the following 227-residue polypeptide: Cytochrome c oxidase subunit 2 (227 aa).

At 1 to 14 (MAYPFQLGLQDATS) the chain is on the mitochondrial intermembrane side. A helical transmembrane segment spans residues 15 to 45 (PIMEELTNFHDHTLMIVFLISSLVLYIISLM). Over 46–59 (LTTKLTHTSTMDAQ) the chain is Mitochondrial matrix. A helical transmembrane segment spans residues 60–87 (EVETIWTILPAAILILIALPSLRILYMM). Topologically, residues 88–227 (DEINNPVLTV…YFENWSTSMI (140 aa)) are mitochondrial intermembrane. The Cu cation site is built by His161, Cys196, Glu198, Cys200, His204, and Met207. Residue Glu198 participates in Mg(2+) binding. Tyr218 is modified (phosphotyrosine).

The protein belongs to the cytochrome c oxidase subunit 2 family. Component of the cytochrome c oxidase (complex IV, CIV), a multisubunit enzyme composed of 14 subunits. The complex is composed of a catalytic core of 3 subunits MT-CO1, MT-CO2 and MT-CO3, encoded in the mitochondrial DNA, and 11 supernumerary subunits COX4I, COX5A, COX5B, COX6A, COX6B, COX6C, COX7A, COX7B, COX7C, COX8 and NDUFA4, which are encoded in the nuclear genome. The complex exists as a monomer or a dimer and forms supercomplexes (SCs) in the inner mitochondrial membrane with NADH-ubiquinone oxidoreductase (complex I, CI) and ubiquinol-cytochrome c oxidoreductase (cytochrome b-c1 complex, complex III, CIII), resulting in different assemblies (supercomplex SCI(1)III(2)IV(1) and megacomplex MCI(2)III(2)IV(2)). Found in a complex with TMEM177, COA6, COX18, COX20, SCO1 and SCO2. Interacts with TMEM177 in a COX20-dependent manner. Interacts with COX20. Interacts with COX16. The cofactor is Cu cation.

Its subcellular location is the mitochondrion inner membrane. It catalyses the reaction 4 Fe(II)-[cytochrome c] + O2 + 8 H(+)(in) = 4 Fe(III)-[cytochrome c] + 2 H2O + 4 H(+)(out). In terms of biological role, component of the cytochrome c oxidase, the last enzyme in the mitochondrial electron transport chain which drives oxidative phosphorylation. The respiratory chain contains 3 multisubunit complexes succinate dehydrogenase (complex II, CII), ubiquinol-cytochrome c oxidoreductase (cytochrome b-c1 complex, complex III, CIII) and cytochrome c oxidase (complex IV, CIV), that cooperate to transfer electrons derived from NADH and succinate to molecular oxygen, creating an electrochemical gradient over the inner membrane that drives transmembrane transport and the ATP synthase. Cytochrome c oxidase is the component of the respiratory chain that catalyzes the reduction of oxygen to water. Electrons originating from reduced cytochrome c in the intermembrane space (IMS) are transferred via the dinuclear copper A center (CU(A)) of subunit 2 and heme A of subunit 1 to the active site in subunit 1, a binuclear center (BNC) formed by heme A3 and copper B (CU(B)). The BNC reduces molecular oxygen to 2 water molecules using 4 electrons from cytochrome c in the IMS and 4 protons from the mitochondrial matrix. This is Cytochrome c oxidase subunit 2 (MT-CO2) from Arvicanthis somalicus (Neumann's grass rat).